A 442-amino-acid chain; its full sequence is Serine hydroxymethyltransferase (442 aa).

Pyridoxal 5'-phosphate-binding positions include Y54, 100-102 (SGS), and H236. C125 and C364 form a disulfide bridge. At K237 the chain carries N6-(pyridoxal phosphate)lysine. Residue G272 coordinates pyridoxal 5'-phosphate.

It belongs to the SHMT family. In terms of assembly, homodimer. Requires pyridoxal 5'-phosphate as cofactor.

It is found in the cytoplasm. Its subcellular location is the mitochondrion matrix. It localises to the plastid. The protein localises to the apicoplast. The protein resides in the nucleus. The catalysed reaction is (6R)-5,10-methylene-5,6,7,8-tetrahydrofolate + glycine + H2O = (6S)-5,6,7,8-tetrahydrofolate + L-serine. Its pathway is one-carbon metabolism; tetrahydrofolate interconversion. With respect to regulation, redox regulation; active in reducing conditions, inactive in oxidizing conditions. The reduction of the cysteine pairs allows the access binding of the tetrahydrofolate substrate to its binding site. This mechanism appears to be unique to Plasmodium species. Its function is as follows. Catalyzes the interconversion of serine to glycine accompanied with the production of 5,10-methylenetetrahydrofolate, a source of one-carbon units used by thymidylate synthase to convert dUMP to dTMP for DNA synthesis. Binds to its own mRNA and to the mRNA of bifunctional dihydrofolate reductase-thymidylate synthase (DHFR-TS) in vitro; the physiological relevance of this interaction is not clear. This chain is Serine hydroxymethyltransferase, found in Plasmodium falciparum (isolate 3D7).